We begin with the raw amino-acid sequence, 833 residues long: Lon protease (833 aa).

The 196-residue stretch at Tyr3–Lys198 folds into the Lon N-terminal domain. ATP is bound at residue Gly390 to Thr397. Positions Tyr627–Lys808 constitute a Lon proteolytic domain. Catalysis depends on residues Ser714 and Lys757.

This sequence belongs to the peptidase S16 family. Homohexamer. Organized in a ring with a central cavity.

Its subcellular location is the cytoplasm. The catalysed reaction is Hydrolysis of proteins in presence of ATP.. Functionally, ATP-dependent serine protease that mediates the selective degradation of mutant and abnormal proteins as well as certain short-lived regulatory proteins. Required for cellular homeostasis and for survival from DNA damage and developmental changes induced by stress. Degrades polypeptides processively to yield small peptide fragments that are 5 to 10 amino acids long. Binds to DNA in a double-stranded, site-specific manner. This is Lon protease from Mycoplasma mobile (strain ATCC 43663 / 163K / NCTC 11711) (Mesomycoplasma mobile).